Consider the following 159-residue polypeptide: Ribosomal RNA large subunit methyltransferase H (159 aa).

Residues L76, G108, and 127–132 (FGKLTM) contribute to the S-adenosyl-L-methionine site.

This sequence belongs to the RNA methyltransferase RlmH family. As to quaternary structure, homodimer.

It localises to the cytoplasm. The catalysed reaction is pseudouridine(1915) in 23S rRNA + S-adenosyl-L-methionine = N(3)-methylpseudouridine(1915) in 23S rRNA + S-adenosyl-L-homocysteine + H(+). Specifically methylates the pseudouridine at position 1915 (m3Psi1915) in 23S rRNA. This chain is Ribosomal RNA large subunit methyltransferase H, found in Lactobacillus delbrueckii subsp. bulgaricus (strain ATCC 11842 / DSM 20081 / BCRC 10696 / JCM 1002 / NBRC 13953 / NCIMB 11778 / NCTC 12712 / WDCM 00102 / Lb 14).